The primary structure comprises 380 residues: Phospho-N-acetylmuramoyl-pentapeptide-transferase (380 aa).

Helical transmembrane passes span 26–46 (IVAAGLVSLLIGLLLGPLFIE), 75–95 (MGGALILLAVTVSTLLFADLG), 98–118 (LVWAALLVTLGYGVIGFWDDW), 135–155 (LVLQVLVVLAVYYGLLTDWQP), 160–180 (GFPFLTIGSLVDLHLTLPFVP), 183–203 (LFSPSLGWLYLPFMIFVVVAT), 222–242 (IVSSMTFLALSYVAGATIAGF), 259–279 (LGVFCSAIFGAGIAFLWYNTY), 283–303 (VFMGDVGSLALGGGLGMLAVL), 311–331 (AILHGVFLAETVSVILQVWSF), and 357–377 (KIIVRFWIMSIMLALVALMSL).

The protein belongs to the glycosyltransferase 4 family. MraY subfamily. The cofactor is Mg(2+).

It localises to the cell inner membrane. The enzyme catalyses UDP-N-acetyl-alpha-D-muramoyl-L-alanyl-gamma-D-glutamyl-meso-2,6-diaminopimeloyl-D-alanyl-D-alanine + di-trans,octa-cis-undecaprenyl phosphate = di-trans,octa-cis-undecaprenyl diphospho-N-acetyl-alpha-D-muramoyl-L-alanyl-D-glutamyl-meso-2,6-diaminopimeloyl-D-alanyl-D-alanine + UMP. The protein operates within cell wall biogenesis; peptidoglycan biosynthesis. Its function is as follows. Catalyzes the initial step of the lipid cycle reactions in the biosynthesis of the cell wall peptidoglycan: transfers peptidoglycan precursor phospho-MurNAc-pentapeptide from UDP-MurNAc-pentapeptide onto the lipid carrier undecaprenyl phosphate, yielding undecaprenyl-pyrophosphoryl-MurNAc-pentapeptide, known as lipid I. This chain is Phospho-N-acetylmuramoyl-pentapeptide-transferase, found in Anaeromyxobacter sp. (strain Fw109-5).